A 1036-amino-acid chain; its full sequence is Potassium-transporting ATPase alpha chain 2 (1036 aa).

The interval 1–50 (MRRKTEIYSVELNGTKDVKPADQRDDKKFKGAKNKDLEPNKSHEKEELKK) is disordered. The Cytoplasmic segment spans residues 1–99 (MRRKTEIYSV…PNTLTPPKQT (99 aa)). Residues 14-50 (GTKDVKPADQRDDKKFKGAKNKDLEPNKSHEKEELKK) are compositionally biased toward basic and acidic residues. Residues 100–120 (PEIIKFLKQMVGGFSILLWIG) traverse the membrane as a helical segment. Topologically, residues 121-143 (AALCWIAFVIQYVNNSASLDNVY) are lumenal. Residues 144–164 (LGAILVLVVILTGIFAYYQEA) traverse the membrane as a helical segment. Topologically, residues 165–300 (KSTNIMASFS…SEKTPIAIEI (136 aa)) are cytoplasmic. A helical membrane pass occupies residues 301–320 (EHFVHIVAGVAVSIDIIFFI). The Lumenal segment spans residues 321–332 (TAVCMKYYVLDA). The helical transmembrane segment at 333 to 350 (IIFLISIIVANVPEGLLA) threads the bilayer. Over 351-784 (TVTVTLSLTA…EEGRLIFDNL (434 aa)) the chain is Cytoplasmic. Asp-388 acts as the 4-aspartylphosphate intermediate in catalysis. Mg(2+)-binding residues include Asp-729 and Asp-733. The helical transmembrane segment at 785–804 (KKTIAYTLTKNIAELCPFLI) threads the bilayer. Topologically, residues 805 to 814 (YIVAGLPLPI) are lumenal. The helical transmembrane segment at 815 to 835 (GTITILFIDLGTDIIPSIALA) threads the bilayer. The Cytoplasmic portion of the chain corresponds to 836-855 (YEKAESDIMNRKPRHKKKDR). A helical membrane pass occupies residues 856–878 (LVNTQLAIYSYLHIGLMQALGGF). Over 879 to 930 (LVYFTVYAQQGFWPTSLINLRVAWETDDINDLEDSYGQEWTRYQRKYLEWTG) the chain is Lumenal. Residues 931–950 (STAFFVAIMIQQIADLIIRK) traverse the membrane as a helical segment. Residues 951 to 964 (TRRNSIFQQGLFRN) are Cytoplasmic-facing. Residue Ser-955 is modified to Phosphoserine; by PKA. A helical membrane pass occupies residues 965–983 (KVIWVGIASQVIVALILSY). At 984–998 (GLGSVPALSFTMLRV) the chain is on the lumenal side. A helical membrane pass occupies residues 999-1019 (QYWFVAVPHAILIWVYDEMRK). The Cytoplasmic portion of the chain corresponds to 1020-1036 (LFIRLYPGSWWDKNMYY).

It belongs to the cation transport ATPase (P-type) (TC 3.A.3) family. Type IIC subfamily. The ATPase pump is composed of a catalytic alpha subunit and an auxiliary non-catalytic beta subunit. The alpha subunit pairs with the beta subunit of gastric H(+)/K(+) ATPase ATP4B or the beta subunit of Na(+)/K(+) ATPases ATP1B1 and ATP1B3; this interaction is required for the formation of a functionally active pump and its targeting at the plasma membrane. As to expression, expressed at high levels in distal colon, coagulating and preputial glands; at much lower levels in proximal colon, kidney, uterus, brain, placenta and lung; and at trace levels in heart and forestomach. Expressed in distal colon epithelium (at protein level). Expressed in anterior prostate (at protein level).

Its subcellular location is the apical cell membrane. The catalysed reaction is K(+)(out) + ATP + H2O + H(+)(in) = K(+)(in) + ADP + phosphate + 2 H(+)(out). It catalyses the reaction K(+)(out) + Na(+)(in) + ATP + H2O = K(+)(in) + Na(+)(out) + ADP + phosphate + H(+). Its activity is regulated as follows. Up-regulated by K(+) ions in a dose-dependent way. Functionally, the catalytic subunit of a H(+)/K(+) ATPase and/or Na(+)/K(+) ATPase pump which transports K(+) ions in exchange for Na(+) and/or H(+) ions across the apical membrane of epithelial cells. Uses ATP as an energy source to pump K(+) ions into the cell while transporting Na(+) and/or H(+) ions to the extracellular compartment. Involved in the maintenance of electrolyte homeostasis through K(+) ion absorption in kidney and colon. In the airway epithelium, may play a primary role in mucus acidification regulating its viscosity and clearance. This is Potassium-transporting ATPase alpha chain 2 (Atp12a) from Rattus norvegicus (Rat).